The sequence spans 151 residues: MNEPVLFLLLLLAIGVIAKNQSLIIAIAVLLAIKLFGLEARLLPAIQAKGINWGVTVITVAVLAPIATGEIGFKQLIGSLQSASAWIALLFGIFVALIAKGGVMLLASDPHITASLVLGTVIAVSLFHGVAVGPLIGAGIAYVVIKMVEYF.

4 consecutive transmembrane segments (helical) span residues 5 to 25, 53 to 73, 86 to 106, and 116 to 136; these read VLFL…SLII, WGVT…EIGF, WIAL…VMLL, and LVLG…GPLI.

The protein belongs to the UPF0756 family.

Its subcellular location is the cell membrane. The sequence is that of UPF0756 membrane protein GTNG_2661 from Geobacillus thermodenitrificans (strain NG80-2).